Consider the following 742-residue polypeptide: Enhancer of polycomb-like protein 1 (742 aa).

Positions M1–T27 are enriched in polar residues. Disordered stretches follow at residues M1–R28, R416–Q446, and K718–A742. Residues Q724–Q734 show a composition bias toward low complexity.

The protein belongs to the enhancer of polycomb family. In terms of assembly, component of the NuA4 histone acetyltransferase complex.

It is found in the nucleus. Its function is as follows. Component of the NuA4 histone acetyltransferase complex which is involved in transcriptional activation of selected genes principally by acetylation of nucleosomal histone H4 and H2A. The NuA4 complex is also involved in DNA repair. Involved in gene silencing by neighboring heterochromatin, blockage of the silencing spreading along the chromosome, and required for cell cycle progression through G2/M. This Eremothecium gossypii (strain ATCC 10895 / CBS 109.51 / FGSC 9923 / NRRL Y-1056) (Yeast) protein is Enhancer of polycomb-like protein 1 (EPL1).